The primary structure comprises 96 residues: Muconolactone Delta-isomerase (96 aa).

The protein belongs to the muconolactone Delta-isomerase family. As to quaternary structure, homodecamer.

The enzyme catalyses (S)-muconolactone = (4,5-dihydro-5-oxofuran-2-yl)-acetate. Its pathway is aromatic compound metabolism; beta-ketoadipate pathway; 5-oxo-4,5-dihydro-2-furylacetate from catechol: step 3/3. The protein is Muconolactone Delta-isomerase (catC) of Acinetobacter baylyi (strain ATCC 33305 / BD413 / ADP1).